Consider the following 155-residue polypeptide: Ribosome maturation factor RimP (155 aa).

This sequence belongs to the RimP family.

Its subcellular location is the cytoplasm. Required for maturation of 30S ribosomal subunits. This is Ribosome maturation factor RimP from Listeria monocytogenes serovar 1/2a (strain ATCC BAA-679 / EGD-e).